A 177-amino-acid chain; its full sequence is Transcription antitermination protein NusB (177 aa).

Residues 1-35 (MTDSTHPTPSARPPRQPRTGTTGTGARKAGSKSGR) are disordered. Positions 17-28 (PRTGTTGTGARK) are enriched in low complexity.

This sequence belongs to the NusB family.

Functionally, involved in transcription antitermination. Required for transcription of ribosomal RNA (rRNA) genes. Binds specifically to the boxA antiterminator sequence of the ribosomal RNA (rrn) operons. This chain is Transcription antitermination protein NusB, found in Acidovorax sp. (strain JS42).